Here is a 484-residue protein sequence, read N- to C-terminus: tRNA-2-methylthio-N(6)-dimethylallyladenosine synthase (484 aa).

The MTTase N-terminal domain occupies 36 to 153; the sequence is GKLYIKTHGC…LPELIRARRE (118 aa). The [4Fe-4S] cluster site is built by cysteine 45, cysteine 82, cysteine 116, cysteine 190, cysteine 194, and cysteine 197. A Radical SAM core domain is found at 176-415; it reads RAEGPSAFVS…HISAHAASIS (240 aa). A TRAM domain is found at 416-479; that stretch reads QSMVGSVQRV…SNSLRGRIQL (64 aa). Residues 428–450 form a disordered region; it reads EGPSRRDPNELTGKSENMRPVNF.

The protein belongs to the methylthiotransferase family. MiaB subfamily. Monomer. Requires [4Fe-4S] cluster as cofactor.

The protein localises to the cytoplasm. It carries out the reaction N(6)-dimethylallyladenosine(37) in tRNA + (sulfur carrier)-SH + AH2 + 2 S-adenosyl-L-methionine = 2-methylsulfanyl-N(6)-dimethylallyladenosine(37) in tRNA + (sulfur carrier)-H + 5'-deoxyadenosine + L-methionine + A + S-adenosyl-L-homocysteine + 2 H(+). Functionally, catalyzes the methylthiolation of N6-(dimethylallyl)adenosine (i(6)A), leading to the formation of 2-methylthio-N6-(dimethylallyl)adenosine (ms(2)i(6)A) at position 37 in tRNAs that read codons beginning with uridine. In Xanthomonas oryzae pv. oryzae (strain MAFF 311018), this protein is tRNA-2-methylthio-N(6)-dimethylallyladenosine synthase.